Consider the following 428-residue polypeptide: UDP-N-acetylglucosamine 1-carboxyvinyltransferase 2 (428 aa).

Lys22–Asn23 is a binding site for phosphoenolpyruvate. Arg92 provides a ligand contact to UDP-N-acetyl-alpha-D-glucosamine. Residue Cys116 is the Proton donor of the active site. Cys116 carries the post-translational modification 2-(S-cysteinyl)pyruvic acid O-phosphothioketal. Residues Arg121–Gln125, Asp304, and Ile326 each bind UDP-N-acetyl-alpha-D-glucosamine.

Belongs to the EPSP synthase family. MurA subfamily.

The protein resides in the cytoplasm. It catalyses the reaction phosphoenolpyruvate + UDP-N-acetyl-alpha-D-glucosamine = UDP-N-acetyl-3-O-(1-carboxyvinyl)-alpha-D-glucosamine + phosphate. It functions in the pathway cell wall biogenesis; peptidoglycan biosynthesis. Its function is as follows. Cell wall formation. Adds enolpyruvyl to UDP-N-acetylglucosamine. The chain is UDP-N-acetylglucosamine 1-carboxyvinyltransferase 2 from Oceanobacillus iheyensis (strain DSM 14371 / CIP 107618 / JCM 11309 / KCTC 3954 / HTE831).